Here is a 219-residue protein sequence, read N- to C-terminus: Proteasome subunit beta (219 aa).

The propeptide at 1–14 is removed in mature form; by autocatalysis; it reads MISGSEYHKEYMKG. Residue threonine 15 is the Nucleophile of the active site.

Belongs to the peptidase T1B family. In terms of assembly, the 20S proteasome core is composed of 14 alpha and 14 beta subunits that assemble into four stacked heptameric rings, resulting in a barrel-shaped structure. The two inner rings, each composed of seven catalytic beta subunits, are sandwiched by two outer rings, each composed of seven alpha subunits. The catalytic chamber with the active sites is on the inside of the barrel. Has a gated structure, the ends of the cylinder being occluded by the N-termini of the alpha-subunits. Is capped at one or both ends by the proteasome regulatory ATPase, PAN.

The protein resides in the cytoplasm. It catalyses the reaction Cleavage of peptide bonds with very broad specificity.. With respect to regulation, the formation of the proteasomal ATPase PAN-20S proteasome complex, via the docking of the C-termini of PAN into the intersubunit pockets in the alpha-rings, triggers opening of the gate for substrate entry. Interconversion between the open-gate and close-gate conformations leads to a dynamic regulation of the 20S proteasome proteolysis activity. Functionally, component of the proteasome core, a large protease complex with broad specificity involved in protein degradation. The chain is Proteasome subunit beta from Methanococcus vannielii (strain ATCC 35089 / DSM 1224 / JCM 13029 / OCM 148 / SB).